Reading from the N-terminus, the 252-residue chain is tRNA (guanine-N(1)-)-methyltransferase (252 aa).

S-adenosyl-L-methionine is bound by residues Gly-116 and 135–140 (LGDYVL).

It belongs to the RNA methyltransferase TrmD family. In terms of assembly, homodimer.

Its subcellular location is the cytoplasm. It catalyses the reaction guanosine(37) in tRNA + S-adenosyl-L-methionine = N(1)-methylguanosine(37) in tRNA + S-adenosyl-L-homocysteine + H(+). Specifically methylates guanosine-37 in various tRNAs. In Limosilactobacillus fermentum (strain NBRC 3956 / LMG 18251) (Lactobacillus fermentum), this protein is tRNA (guanine-N(1)-)-methyltransferase.